A 289-amino-acid chain; its full sequence is Inorganic pyrophosphatase (289 aa).

Residue Ser2 is modified to N-acetylserine. Residue Lys57 is modified to N6-acetyllysine. Residues Asp116, Asp121, and Asp153 each coordinate Mg(2+). Lys228 bears the N6-acetyllysine mark. A Phosphoserine modification is found at Ser250.

Belongs to the PPase family. Homodimer. Requires Mg(2+) as cofactor.

It is found in the cytoplasm. The enzyme catalyses diphosphate + H2O = 2 phosphate + H(+). This Macaca fascicularis (Crab-eating macaque) protein is Inorganic pyrophosphatase (PPA1).